The primary structure comprises 426 residues: Glucose-1-phosphate adenylyltransferase (426 aa).

Alpha-D-glucose 1-phosphate is bound by residues glycine 165, 180-181 (EK), and serine 191.

This sequence belongs to the bacterial/plant glucose-1-phosphate adenylyltransferase family. In terms of assembly, homotetramer.

It carries out the reaction alpha-D-glucose 1-phosphate + ATP + H(+) = ADP-alpha-D-glucose + diphosphate. The protein operates within glycan biosynthesis; glycogen biosynthesis. In terms of biological role, involved in the biosynthesis of ADP-glucose, a building block required for the elongation reactions to produce glycogen. Catalyzes the reaction between ATP and alpha-D-glucose 1-phosphate (G1P) to produce pyrophosphate and ADP-Glc. This is Glucose-1-phosphate adenylyltransferase from Ruminiclostridium cellulolyticum (strain ATCC 35319 / DSM 5812 / JCM 6584 / H10) (Clostridium cellulolyticum).